Consider the following 396-residue polypeptide: Elongation factor Tu (396 aa).

The region spanning 10 to 206 (KPHVNIGTIG…AVDESVPEPV (197 aa)) is the tr-type G domain. The tract at residues 19 to 26 (GHVDHGKT) is G1. 19–26 (GHVDHGKT) provides a ligand contact to GTP. Threonine 26 lines the Mg(2+) pocket. A G2 region spans residues 62–66 (GITIN). Residues 83-86 (DAPG) are G3. GTP contacts are provided by residues 83–87 (DAPGH) and 138–141 (NKSD). The tract at residues 138–141 (NKSD) is G4. The tract at residues 176–178 (SGL) is G5.

This sequence belongs to the TRAFAC class translation factor GTPase superfamily. Classic translation factor GTPase family. EF-Tu/EF-1A subfamily. Monomer.

The protein localises to the cytoplasm. It carries out the reaction GTP + H2O = GDP + phosphate + H(+). Its function is as follows. GTP hydrolase that promotes the GTP-dependent binding of aminoacyl-tRNA to the A-site of ribosomes during protein biosynthesis. This is Elongation factor Tu from Beutenbergia cavernae (strain ATCC BAA-8 / DSM 12333 / CCUG 43141 / JCM 11478 / NBRC 16432 / NCIMB 13614 / HKI 0122).